Reading from the N-terminus, the 398-residue chain is Succinyl-diaminopimelate desuccinylase (398 aa).

H68 serves as a coordination point for Zn(2+). The active site involves D70. D101 contributes to the Zn(2+) binding site. E135 (proton acceptor) is an active-site residue. E136, E164, and H349 together coordinate Zn(2+).

It belongs to the peptidase M20A family. DapE subfamily. Homodimer. It depends on Zn(2+) as a cofactor. Co(2+) serves as cofactor.

The enzyme catalyses N-succinyl-(2S,6S)-2,6-diaminopimelate + H2O = (2S,6S)-2,6-diaminopimelate + succinate. It functions in the pathway amino-acid biosynthesis; L-lysine biosynthesis via DAP pathway; LL-2,6-diaminopimelate from (S)-tetrahydrodipicolinate (succinylase route): step 3/3. Functionally, catalyzes the hydrolysis of N-succinyl-L,L-diaminopimelic acid (SDAP), forming succinate and LL-2,6-diaminopimelate (DAP), an intermediate involved in the bacterial biosynthesis of lysine and meso-diaminopimelic acid, an essential component of bacterial cell walls. This is Succinyl-diaminopimelate desuccinylase from Wolbachia pipientis subsp. Culex pipiens (strain wPip).